The sequence spans 502 residues: Putative F-box/FBD/LRR-repeat protein At5g22610 (502 aa).

The F-box domain occupies 17-63 (EDLISKLPEVLLSQILSYLPTKDIVRTSVLSKRWKSVWLLIPGLDLD). LRR repeat units follow at residues 70–98 (YDTFVDFMNEFLFFSREENPCLHKLKLSI), 99–127 (QKNENDPSCVTLWTDCVARGKLQHLDVEF), 147–180 (CKTLLHLRLYRVLLGNFDQSVDSLPSLKSMCLEE), 181–206 (NVYSNEASLESLISSCRVLEDLTIVK), 208–228 (DDNVRFLRVHSQSLTSLSVGY), 238–263 (YYYDRDRGNSGLVIDAPRLKYLTFNN), and 344–373 (SVWLSSFDFLDILPKLLESCPNLKSIVLET). Residues 384 to 435 (VERRVSSVPECLLSSLEFVEIKNRISVDDGALEVARYFVENSVNLQKVVLRL) form the FBD domain.

This is Putative F-box/FBD/LRR-repeat protein At5g22610 from Arabidopsis thaliana (Mouse-ear cress).